The following is a 107-amino-acid chain: UPF0473 protein LACR_0139 (107 aa).

It belongs to the UPF0473 family.

The chain is UPF0473 protein LACR_0139 from Lactococcus lactis subsp. cremoris (strain SK11).